The chain runs to 815 residues: Leucine--tRNA ligase (815 aa).

Positions 42-52 (PYPSGRLHMGH) match the 'HIGH' region motif. The short motif at 571–575 (KMSKS) is the 'KMSKS' region element. Residue Lys574 participates in ATP binding.

It belongs to the class-I aminoacyl-tRNA synthetase family.

It localises to the cytoplasm. The enzyme catalyses tRNA(Leu) + L-leucine + ATP = L-leucyl-tRNA(Leu) + AMP + diphosphate. The chain is Leucine--tRNA ligase from Vesicomyosocius okutanii subsp. Calyptogena okutanii (strain HA).